The sequence spans 816 residues: Phenylalanine--tRNA ligase beta subunit (816 aa).

The tRNA-binding domain occupies 40-148 (FEELAALKTG…EGMAHGQRFI (109 aa)). The region spanning 401–479 (KAVEVQRFSI…RIYGYDNVPT (79 aa)) is the B5 domain. Mg(2+) contacts are provided by D457, D463, E466, and E467. The 94-residue stretch at 721–814 (PVYPAVKRDI…LTDRFGGSFR (94 aa)) folds into the FDX-ACB domain.

It belongs to the phenylalanyl-tRNA synthetase beta subunit family. Type 1 subfamily. Tetramer of two alpha and two beta subunits. Mg(2+) is required as a cofactor.

The protein localises to the cytoplasm. The enzyme catalyses tRNA(Phe) + L-phenylalanine + ATP = L-phenylalanyl-tRNA(Phe) + AMP + diphosphate + H(+). The polypeptide is Phenylalanine--tRNA ligase beta subunit (Desulfotalea psychrophila (strain LSv54 / DSM 12343)).